The sequence spans 390 residues: RNA polymerase sigma factor SigA (390 aa).

Residues 48-57 show a composition bias toward acidic residues; it reads FLEPQTDEDD. The segment at 48–75 is disordered; that stretch reads FLEPQTDEDDAKSGKAAKSRRRTQSKKK. The segment covering 62–75 has biased composition (basic residues); sequence KAAKSRRRTQSKKK. Positions 158–228 are sigma-70 factor domain-2; it reads MVQSNLRLVV…TRAIADQSRT (71 aa). The Interaction with polymerase core subunit RpoC signature appears at 182-185; the sequence is DLIQ. Residues 237 to 312 form a sigma-70 factor domain-3 region; it reads ETISRIKKTT…ESDGETPEDQ (76 aa). Residues 325–378 form a sigma-70 factor domain-4 region; the sequence is VLDSLSPRERDVLRLRYGLDDGRMKTLEEIGQIFNVTRERIRQIEAKALRKLRH. Positions 351–370 form a DNA-binding region, H-T-H motif; it reads LEEIGQIFNVTRERIRQIEA.

The protein belongs to the sigma-70 factor family. RpoD/SigA subfamily. In terms of assembly, interacts transiently with the RNA polymerase catalytic core.

Its subcellular location is the cytoplasm. Functionally, sigma factors are initiation factors that promote the attachment of RNA polymerase to specific initiation sites and are then released. This sigma factor is the primary sigma factor during exponential growth. The polypeptide is RNA polymerase sigma factor SigA (Nostoc sp. (strain PCC 7120 / SAG 25.82 / UTEX 2576)).